The sequence spans 443 residues: Aklavinone 7-beta-L-rhodosaminyltransferase (443 aa).

An N-terminal signal peptide occupies residues 1–23; that stretch reads MRVLLTSFALDAHFNGSVPLAWA.

It belongs to the glycosyltransferase 28 family.

It catalyses the reaction dTDP-beta-L-rhodosamine + aklavinone = aclacinomycin T + dTDP + 2 H(+). With respect to regulation, the activity of AknS is substantially increased by the addition of the accessory protein AknT. Functionally, involved in the biosynthesis of the anthracycline antitumor agent aclacinomycin A. Catalyzes the transfer of the proximal deoxyhexose, L-rhodosamine, from dTDP-beta-L-rhodosamine to the C7-OH of aklavinone aglycone to yield aclacinomycin T (rhodosaminyl-aklavinone). It can also use dTDP-2-deoxy-beta-L-fucose, TDP-2-deoxyfucose, dTDP-4-amino-2-deoxyrhamnose, TDP-L-rhodosamine as sugar donor and epsilon-rhodomycinone as sugar acceptor. This is Aklavinone 7-beta-L-rhodosaminyltransferase from Streptomyces galilaeus.